A 212-amino-acid polypeptide reads, in one-letter code: ATP-dependent dethiobiotin synthetase BioD (212 aa).

Position 13–18 (13–18) interacts with ATP; sequence GIGKTV. Residue Thr17 coordinates Mg(2+). Residue Lys33 is part of the active site. Residue Ser37 coordinates substrate. Mg(2+) is bound at residue Glu100. ATP-binding positions include 100 to 103 and 184 to 186; these read EGAG and PRL.

It belongs to the dethiobiotin synthetase family. Homodimer. Requires Mg(2+) as cofactor.

Its subcellular location is the cytoplasm. It catalyses the reaction (7R,8S)-7,8-diammoniononanoate + CO2 + ATP = (4R,5S)-dethiobiotin + ADP + phosphate + 3 H(+). It functions in the pathway cofactor biosynthesis; biotin biosynthesis; biotin from 7,8-diaminononanoate: step 1/2. In terms of biological role, catalyzes a mechanistically unusual reaction, the ATP-dependent insertion of CO2 between the N7 and N8 nitrogen atoms of 7,8-diaminopelargonic acid (DAPA, also called 7,8-diammoniononanoate) to form a ureido ring. The protein is ATP-dependent dethiobiotin synthetase BioD of Agrobacterium fabrum (strain C58 / ATCC 33970) (Agrobacterium tumefaciens (strain C58)).